The sequence spans 244 residues: uncharacterized protein (244 aa).

This is an uncharacterized protein from Saccharomyces cerevisiae (strain ATCC 204508 / S288c) (Baker's yeast).